We begin with the raw amino-acid sequence, 89 residues long: Small ribosomal subunit protein uS15 (89 aa).

It belongs to the universal ribosomal protein uS15 family. In terms of assembly, part of the 30S ribosomal subunit. Forms a bridge to the 50S subunit in the 70S ribosome, contacting the 23S rRNA.

Its function is as follows. One of the primary rRNA binding proteins, it binds directly to 16S rRNA where it helps nucleate assembly of the platform of the 30S subunit by binding and bridging several RNA helices of the 16S rRNA. Functionally, forms an intersubunit bridge (bridge B4) with the 23S rRNA of the 50S subunit in the ribosome. The sequence is that of Small ribosomal subunit protein uS15 from Corynebacterium kroppenstedtii (strain DSM 44385 / JCM 11950 / CIP 105744 / CCUG 35717).